The primary structure comprises 272 residues: HMP-PP phosphatase (272 aa).

The active-site Nucleophile is D8. 3 residues coordinate Mg(2+): D8, D10, and D212.

It belongs to the HAD-like hydrolase superfamily. Cof family. Requires Mg(2+) as cofactor.

It catalyses the reaction 4-amino-2-methyl-5-(diphosphooxymethyl)pyrimidine + H2O = 4-amino-2-methyl-5-(phosphooxymethyl)pyrimidine + phosphate + H(+). Functionally, catalyzes the hydrolysis of 4-amino-2-methyl-5-hydroxymethylpyrimidine pyrophosphate (HMP-PP) to 4-amino-2-methyl-5-hydroxymethylpyrimidine phosphate (HMP-P). This Salmonella arizonae (strain ATCC BAA-731 / CDC346-86 / RSK2980) protein is HMP-PP phosphatase.